The chain runs to 433 residues: MRIRGVSDFDYLLLLTMLALTSIGILFIYSSGVNSEGHVISREYLKQIVWAVMGVVLMLSVSMYDYHRFKDRTTLIFAGFILLLIYTRLFGRYVNGAKSWIGVGEFGIQISEFAKIAYILYLAHYLVYSQSEPMLKRFAKAGVITLLPMALILSQPDLGTASVYLPIFLVMCFIAGFPLRLIFAVVCVVLLTLLFTLLPLWEQTFLQYQGVATRIADSRMLSLFVFFSLSATSAVAVVGYLLSGRKYYYWITYALGMVSISYGASLLGVRVLKPYQMMRLIIFLNPEVDPLKAGWHIIQSMIAIGSGGAFGMGYLRGPQSHYRFLPQQSTDFIFSILSEEWGFVGGVIVFGLYLLFFLHTLSIMSHVDDLYGKLIASGVLGMFLFHFVVNVGMTMGIMPITGIPLLLLSYGGSSLWTAMIATGLLMSINARQL.

Transmembrane regions (helical) follow at residues 9–29, 44–64, 74–94, 100–120, 158–178, 181–201, 221–241, 249–269, 295–315, 341–361, 378–398, and 400–420; these read FDYLLLLTMLALTSIGILFIY, YLKQIVWAVMGVVLMLSVSMY, TLIFAGFILLLIYTRLFGRYV, WIGVGEFGIQISEFAKIAYIL, LGTASVYLPIFLVMCFIAGFP, LIFAVVCVVLLTLLFTLLPLW, LSLFVFFSLSATSAVAVVGYL, YWITYALGMVSISYGASLLGV, WHIIQSMIAIGSGGAFGMGYL, WGFVGGVIVFGLYLLFFLHTL, GVLGMFLFHFVVNVGMTMGIM, and ITGIPLLLLSYGGSSLWTAMI.

This sequence belongs to the SEDS family. MrdB/RodA subfamily.

It is found in the cell inner membrane. It carries out the reaction [GlcNAc-(1-&gt;4)-Mur2Ac(oyl-L-Ala-gamma-D-Glu-L-Lys-D-Ala-D-Ala)](n)-di-trans,octa-cis-undecaprenyl diphosphate + beta-D-GlcNAc-(1-&gt;4)-Mur2Ac(oyl-L-Ala-gamma-D-Glu-L-Lys-D-Ala-D-Ala)-di-trans,octa-cis-undecaprenyl diphosphate = [GlcNAc-(1-&gt;4)-Mur2Ac(oyl-L-Ala-gamma-D-Glu-L-Lys-D-Ala-D-Ala)](n+1)-di-trans,octa-cis-undecaprenyl diphosphate + di-trans,octa-cis-undecaprenyl diphosphate + H(+). The protein operates within cell wall biogenesis; peptidoglycan biosynthesis. In terms of biological role, peptidoglycan polymerase that is essential for cell wall elongation. The chain is Peptidoglycan glycosyltransferase RodA from Treponema pallidum (strain Nichols).